Here is a 141-residue protein sequence, read N- to C-terminus: Large ribosomal subunit protein uL11 (141 aa).

It belongs to the universal ribosomal protein uL11 family. As to quaternary structure, part of the ribosomal stalk of the 50S ribosomal subunit. Interacts with L10 and the large rRNA to form the base of the stalk. L10 forms an elongated spine to which L12 dimers bind in a sequential fashion forming a multimeric L10(L12)X complex. One or more lysine residues are methylated.

Functionally, forms part of the ribosomal stalk which helps the ribosome interact with GTP-bound translation factors. The polypeptide is Large ribosomal subunit protein uL11 (Thermotoga petrophila (strain ATCC BAA-488 / DSM 13995 / JCM 10881 / RKU-1)).